A 165-amino-acid polypeptide reads, in one-letter code: Deoxyuridine 5'-triphosphate nucleotidohydrolase (165 aa).

Belongs to the dUTPase family. Homotrimer. The cofactor is Mg(2+).

The protein resides in the host cytoplasm. Its subcellular location is the virion. It catalyses the reaction dUTP + H2O = dUMP + diphosphate + H(+). Functionally, the viral dUTPase may play a role in lowering the dUTP concentration in natural infections to minimize misincorporation of deoxyuridine into the viral DNA and ensure the fidelity of genome replication. The sequence is that of Deoxyuridine 5'-triphosphate nucleotidohydrolase from African swine fever virus (isolate Tick/South Africa/Pretoriuskop Pr4/1996) (ASFV).